The following is a 506-amino-acid chain: Glycerol kinase (506 aa).

Residue Thr12 participates in ADP binding. The ATP site is built by Thr12, Thr13, and Ser14. Position 12 (Thr12) interacts with sn-glycerol 3-phosphate. Residue Arg16 participates in ADP binding. Residues Arg82, Glu83, Tyr134, and Asp246 each coordinate sn-glycerol 3-phosphate. Residues Arg82, Glu83, Tyr134, Asp246, and Gln247 each coordinate glycerol. Residues Thr268 and Gly312 each contribute to the ADP site. ATP-binding residues include Thr268, Gly312, Gln316, and Gly413. Positions 413 and 417 each coordinate ADP.

The protein belongs to the FGGY kinase family.

The enzyme catalyses glycerol + ATP = sn-glycerol 3-phosphate + ADP + H(+). It participates in polyol metabolism; glycerol degradation via glycerol kinase pathway; sn-glycerol 3-phosphate from glycerol: step 1/1. Inhibited by fructose 1,6-bisphosphate (FBP). Key enzyme in the regulation of glycerol uptake and metabolism. Catalyzes the phosphorylation of glycerol to yield sn-glycerol 3-phosphate. This is Glycerol kinase from Leifsonia xyli subsp. xyli (strain CTCB07).